The primary structure comprises 869 residues: AP-3 complex subunit delta (869 aa).

Residue Ser-2 is modified to N-acetylserine. HEAT repeat units follow at residues 33–70 (NFIS…LHGV), 107–142 (SVML…GTHD), 143–179 (LARD…KYHD), 180–216 (AVKV…KDPQ), 218–254 (CLPL…IEPR), 292–329 (AAVK…KHLW), and 330–366 (AVLE…EDNV). The tract at residues 738–869 (ISQDSFNPKR…EQVIIPDFLL (132 aa)) is disordered. The segment covering 769 to 780 (ITPQAKTNIQTA) has biased composition (polar residues). The segment covering 815 to 830 (QEKEESSRIENHQNSE) has biased composition (basic and acidic residues). Positions 831 to 850 (KKKKKKKKKKGEGSSKHKSR) are enriched in basic residues.

Belongs to the adaptor complexes large subunit family. In terms of assembly, adaptor protein complex 3 (AP-3) is a heterotetramer composed of two large adaptins (delta-type subunit and beta-type subunit), a medium adaptin (mu-type subunit) and a small adaptin (sigma-type subunit). Binds to EPSIN2.

It is found in the cytoplasm. Its subcellular location is the golgi apparatus membrane. Its function is as follows. Part of the AP-3 complex, an adaptor-related complex which seems to be clathrin-associated. The complex is associated with the Golgi region as well as more peripheral structures. It facilitates the budding of vesicles from the Golgi membrane and may be directly involved in trafficking to the vacuole. It also function in maintaining the identity of lytic vacuoles and in regulating the transition between storage and lytic vacuoles. The chain is AP-3 complex subunit delta (DELTA-ADR) from Arabidopsis thaliana (Mouse-ear cress).